The sequence spans 675 residues: Nexilin (675 aa).

A disordered region spans residues M1–E66. K16 is modified (phosphoserine). Basic and acidic residues predominate over residues G27–E66. Phosphoserine is present on S80. The tract at residues R105–R127 is disordered. Residue S241 is modified to Phosphoserine. Disordered stretches follow at residues L254–K278 and S313–R336. 2 positions are modified to phosphoserine: S357 and S365. T370 carries the post-translational modification Phosphothreonine. 2 disordered regions span residues E487–M513 and L551–F584. S564 and S569 each carry phosphoserine. The region spanning P582–T670 is the Ig-like domain.

In terms of assembly, interacts with F-actin. Abundantly expressed in heart and skeletal muscle, and at lower levels in placenta, lung, liver and pancreas. Also expressed in HeLaS3 and MOLT-4 cell lines.

The protein localises to the cytoplasm. Its subcellular location is the cytoskeleton. It localises to the cell junction. It is found in the adherens junction. The protein resides in the myofibril. The protein localises to the sarcomere. Its subcellular location is the z line. Functionally, involved in regulating cell migration through association with the actin cytoskeleton. Has an essential role in the maintenance of Z line and sarcomere integrity. This is Nexilin from Homo sapiens (Human).